Here is a 287-residue protein sequence, read N- to C-terminus: Ribosomal RNA small subunit methyltransferase A (287 aa).

Positions 28, 30, 55, 77, 103, and 123 each coordinate S-adenosyl-L-methionine.

The protein belongs to the class I-like SAM-binding methyltransferase superfamily. rRNA adenine N(6)-methyltransferase family. RsmA subfamily.

Its subcellular location is the cytoplasm. It carries out the reaction adenosine(1518)/adenosine(1519) in 16S rRNA + 4 S-adenosyl-L-methionine = N(6)-dimethyladenosine(1518)/N(6)-dimethyladenosine(1519) in 16S rRNA + 4 S-adenosyl-L-homocysteine + 4 H(+). Its function is as follows. Specifically dimethylates two adjacent adenosines (A1518 and A1519) in the loop of a conserved hairpin near the 3'-end of 16S rRNA in the 30S particle. May play a critical role in biogenesis of 30S subunits. The sequence is that of Ribosomal RNA small subunit methyltransferase A from Nitrobacter winogradskyi (strain ATCC 25391 / DSM 10237 / CIP 104748 / NCIMB 11846 / Nb-255).